We begin with the raw amino-acid sequence, 261 residues long: Uridine-cytidine kinase 2 (261 aa).

Residues 1–24 form a disordered region; that stretch reads MAGDSEQALPKHSPQNGQPFLIGV. 26–34 lines the ATP pocket; that stretch reads GGTASGKSS. Residues aspartate 83, tyrosine 111, histidine 116, arginine 165, arginine 175, and glutamine 183 each contribute to the substrate site. Aspartate 212 contributes to the ATP binding site. The segment covering 238–247 has biased composition (polar residues); that stretch reads NGYTNGFTSP. Residues 238–261 are disordered; sequence NGYTNGFTSPRTRHPSDSNSSRPH.

This sequence belongs to the uridine kinase family. As to quaternary structure, homotetramer.

The catalysed reaction is uridine + ATP = UMP + ADP + H(+). It carries out the reaction cytidine + ATP = CMP + ADP + H(+). Its pathway is pyrimidine metabolism; CTP biosynthesis via salvage pathway; CTP from cytidine: step 1/3. It functions in the pathway pyrimidine metabolism; UMP biosynthesis via salvage pathway; UMP from uridine: step 1/1. In terms of biological role, phosphorylates uridine and cytidine to uridine monophosphate and cytidine monophosphate. Does not phosphorylate deoxyribonucleosides or purine ribonucleosides. Can use ATP or GTP as a phosphate donor. The sequence is that of Uridine-cytidine kinase 2 (uck2) from Xenopus tropicalis (Western clawed frog).